The following is a 984-amino-acid chain: Ubiquitin conjugation factor E4 ufd-2 (984 aa).

Residues 909 to 982 (DVPEEFKDPI…QEWICQKRNS (74 aa)) form the U-box domain.

This sequence belongs to the ubiquitin conjugation factor E4 family. In terms of assembly, forms a complex composed of deubiquitinating enzyme atx-3, E4 ubiquitin-protein ligase ufd-2 and cdc-48.1; within the complex interacts with atx-3 and cdc-48.1 (via DDDLYN motif). Forms a complex composed of cdc-48.1, myosin chaperone unc-45, ubiquitin-protein ligases ufd-2 and chn-1; the complex targets myosin chaperone unc-45 for proteasomal degradation; within the complex interacts with cdc-48.1 (via DDDLYN motif), chn-1 and unc-45. Forms a complex composed of unc-45 and myosin heavy chain B unc-54; the complex targets unfolded unc-54 for proteasomal degradation; within the complex interacts with unc-45 (via TPR domain) and unc-54. Interacts with cdc-48.2 (via DDDLYN motif). In terms of tissue distribution, expressed in the germline (at protein level).

It is found in the cytoplasm. It localises to the nucleus membrane. Its subcellular location is the nucleus. The protein resides in the nucleolus. The enzyme catalyses S-ubiquitinyl-[E2 ubiquitin-conjugating enzyme]-L-cysteine + [acceptor protein]-L-lysine = [E2 ubiquitin-conjugating enzyme]-L-cysteine + N(6)-ubiquitinyl-[acceptor protein]-L-lysine.. It participates in protein modification; protein ubiquitination. Acts as an E4 ubiquitin ligase mediating the assembly of polyubiquitin chains on substrates ubiquitinated by another E3 ubiquitin ligase. The elongation of preexisting ubiquitin chains preferentially targets ubiquitin 'Lys-29' and 'Lys-48' residues. Also functions as an E3 ligase in conjunction with specific E1 and E2 ligases. Probably by regulating protein ubiquitination at DNA damage repair sites, coordinates DNA double-strand-break repair and apoptosis in the germline. Required for germline apoptosis in response to DNA damage downstream of cep-1. Involved in the resolution of DNA-repair sites by promoting the release of rad-51 from DNA damage foci. In association with protein-ligase chn-1, acts as an E3/E4 ligase to poly-ubiquitinate lysine residues in the UCS domain of myosin chaperone unc-45. By targeting myosin chaperone unc-45 for proteasomal degradation, regulates myosin assembly in body wall muscles in association with cdc-48.1 and chn-1. However, in a contrasting study, acts as an E3 ligase, independently of chn-1, to poly-ubiquitinate unc-45 without promoting unc-45 proteasomal degradation. Instead, uses unc-45 as an adapter protein to recruit and poly-ubiquitinate unfolded myosin heavy chain B unc-54. The polypeptide is Ubiquitin conjugation factor E4 ufd-2 (Caenorhabditis elegans).